Consider the following 466-residue polypeptide: Tyrosinase HcTyr1 (466 aa).

Residues His43, His78, His87, His211, His215, and His238 each contribute to the Cu cation site.

This sequence belongs to the tyrosinase family. As to quaternary structure, monomer. Formation of a dimer is observed when the protein is in its holo-form. Cu(2+) is required as a cofactor. In vitro, the C-terminal lid-domain is slowly cleaved off in an autoprocessive time dependent manner, leading to the formation of cleaved-HcTyr1. The processing rate is not influenced by factors such as pH and added metal ions.

The enzyme catalyses L-tyrosine + O2 = L-dopaquinone + H2O. The catalysed reaction is 2 L-tyrosine + O2 = 2 L-dopa. It catalyses the reaction 2 L-dopa + O2 = 2 L-dopaquinone + 2 H2O. Cleavage of the lid-domain increases activity levels, affinity for substrate and turnover rate. Exhibits high saline tolerance. Functionally, copper-containing oxidase that catalyzes the conversion of L-tyrosine to L-dopa and then to L-dopaquinone. Can use various phenols such as p-coumaric acid, phenol, pyrocatechol, syringol or pyrogallol. Accepts several of the constituents of lignin and potentially participates in lignin functionalization. The chain is Tyrosinase HcTyr1 from Hahella sp. (strain CCB-MM4).